Reading from the N-terminus, the 393-residue chain is MKVLVINCGSSSLKYQLFDMTDESVLCKGLVERIGIEGSKLTHKVNGEKLVVEEPMKDHTEAINHVFDALLDEKYGVIKSLDEVSAIGHRVLHGGDKLTESCIIDDKVKDKIREFIKFGPLHNPANLMGIEACEKLAPGKKNIAVFDTAFHQTMPAKTFMYAIPYEYYEDYRLRKFGFHGTSHRYITLRTQQLLGKEDINIITVHLGNGSSIAAVKNGKCYDTSMGLTPLEGLLMGTRSGDLDPTVMTFLMNEKGYSADEMNQILNKKSGVLGVSGISSDFRDLEEEAEKGNDRAQLALDMFIERVKRYIGGYMAELGHVDAICFAGGIGENSSSMRKDILDTFEELGVKLDLEKNNTREEALISADDSKVKVYVVPTNEELMIARDTLELAK.

Residue Asn-7 coordinates Mg(2+). An ATP-binding site is contributed by Lys-14. Substrate is bound at residue Arg-90. Asp-147 functions as the Proton donor/acceptor in the catalytic mechanism. ATP is bound by residues 205–209 (HLGNG), 280–282 (DFR), and 328–332 (GIGEN). Position 380 (Glu-380) interacts with Mg(2+).

The protein belongs to the acetokinase family. As to quaternary structure, homodimer. Mg(2+) serves as cofactor. Requires Mn(2+) as cofactor.

It is found in the cytoplasm. The catalysed reaction is acetate + ATP = acetyl phosphate + ADP. It participates in metabolic intermediate biosynthesis; acetyl-CoA biosynthesis; acetyl-CoA from acetate: step 1/2. Functionally, catalyzes the formation of acetyl phosphate from acetate and ATP. Can also catalyze the reverse reaction. This chain is Acetate kinase, found in Finegoldia magna (strain ATCC 29328 / DSM 20472 / WAL 2508) (Peptostreptococcus magnus).